The sequence spans 944 residues: MDKILIRGARTHNLKNIDLTLPRDKLIVITGLSGSGKSSLAFDTLYAEGQRRYVESLSAYARQFLSMMEKPDVDTIEGLSPAISIEQKSTSHNPRSTVGTITEIYDYLRLLYARVGTPRCPDHDIPLEAQTISQMVDLVLERPEGSKLMLLAPVVRERKGEHLAVFDELRAQGFVRARVNGKLYELDELPKLDKQKKHSIDVVVDRFKVRADLQQRLAESFETALKLADGIALVAPMDDEQGEETIFSARFACPVCGHAISELEPKLFSFNNPAGACPTCDGLGVKQFFDTKRLVNTELTLAEGAIRGWDRRNVYYFQMLGSLAAHYGFSLEEPFGELSAEHQKVILQGSGKQSVDFKYLNDRGDIVKRSHPFEGIVPNLERRYRETESATVREELAKFLGTQPCPDCRGTRLRREARHVWVGEKTLPAVTNLPIGEASNYFGQLTLTGRRGEIAAKILKEICERLQFLVNVGLDYLTLDRSADTLSGGEAQRIRLASQIGAGLVGVMYILDEPSIGLHQRDNDRLLATLNHLRDLGNTVIVVEHDEDAIRLADYVVDIGPGAGVHGGQIVAEGSPQEVMDHPDSLTGKYLSGRKKIVVPAKRTPRNKKLQLKLKGARGNNLQNVDLEVPIGLLTCVTGVSGSGKSTLINNTLYPLAATALNGASSLEAAPHSSMDGLQHLDKVVDIDQSPIGRTPRSNPATYTGIFTPIRELFSGVPESRSRGYGPGRFSFNVKGGRCEACQGDGLIKVEMHFLPDIYVPCDVCKSKRYNRETLEIKYKGKNIHEVLEMTIEDAREFFDAVPALARKLQTLMDVGLSYIKLGQSATTLSGGEAQRVKLSRELSKRDTGKTLYILDEPTTGLHFADIQQLLDVLHRLRDHGNTVVVIEHNLDVIKTADWLVDLGPEGGSKGGQIIACGTPEELSEMKQSYTGHYLKPLLERDRA.

31–38 (GLSGSGKS) provides a ligand contact to ATP. The segment at 253-280 (CPVCGHAISELEPKLFSFNNPAGACPTC) adopts a C4-type zinc-finger fold. 2 consecutive ABC transporter domains span residues 309–586 (WDRR…PDSL) and 606–936 (RNKK…HYLK). 639–646 (GVSGSGKS) contributes to the ATP binding site. Residues 739-765 (CEACQGDGLIKVEMHFLPDIYVPCDVC) form a C4-type zinc finger.

Belongs to the ABC transporter superfamily. UvrA family. As to quaternary structure, forms a heterotetramer with UvrB during the search for lesions.

Its subcellular location is the cytoplasm. In terms of biological role, the UvrABC repair system catalyzes the recognition and processing of DNA lesions. UvrA is an ATPase and a DNA-binding protein. A damage recognition complex composed of 2 UvrA and 2 UvrB subunits scans DNA for abnormalities. When the presence of a lesion has been verified by UvrB, the UvrA molecules dissociate. This chain is UvrABC system protein A, found in Pseudomonas putida (strain ATCC 47054 / DSM 6125 / CFBP 8728 / NCIMB 11950 / KT2440).